The chain runs to 565 residues: Arginine--tRNA ligase (565 aa).

The 'HIGH' region signature appears at 128-138 (ANPTGPLHVGH).

The protein belongs to the class-I aminoacyl-tRNA synthetase family. As to quaternary structure, monomer.

It localises to the cytoplasm. The enzyme catalyses tRNA(Arg) + L-arginine + ATP = L-arginyl-tRNA(Arg) + AMP + diphosphate. The sequence is that of Arginine--tRNA ligase from Delftia acidovorans (strain DSM 14801 / SPH-1).